Reading from the N-terminus, the 262-residue chain is Proteasome subunit alpha (262 aa).

Residues 235–262 are disordered; that stretch reads LLPTTGESDAGDSGADGSPSGDSPDTSA.

This sequence belongs to the peptidase T1A family. The 20S proteasome core is composed of 14 alpha and 14 beta subunits that assemble into four stacked heptameric rings, resulting in a barrel-shaped structure. The two inner rings, each composed of seven catalytic beta subunits, are sandwiched by two outer rings, each composed of seven alpha subunits. The catalytic chamber with the active sites is on the inside of the barrel. Has a gated structure, the ends of the cylinder being occluded by the N-termini of the alpha-subunits. Is capped by the proteasome-associated ATPase, ARC.

The protein resides in the cytoplasm. It participates in protein degradation; proteasomal Pup-dependent pathway. With respect to regulation, the formation of the proteasomal ATPase ARC-20S proteasome complex, likely via the docking of the C-termini of ARC into the intersubunit pockets in the alpha-rings, may trigger opening of the gate for substrate entry. Interconversion between the open-gate and close-gate conformations leads to a dynamic regulation of the 20S proteasome proteolysis activity. Component of the proteasome core, a large protease complex with broad specificity involved in protein degradation. The sequence is that of Proteasome subunit alpha from Gordonia bronchialis (strain ATCC 25592 / DSM 43247 / BCRC 13721 / JCM 3198 / KCTC 3076 / NBRC 16047 / NCTC 10667) (Rhodococcus bronchialis).